Consider the following 1200-residue polypeptide: Chromosome partition protein Smc (1200 aa).

ATP is bound at residue 33–40; it reads PNGSGKSN. Positions 90 to 109 are disordered; that stretch reads GENLSEPGANHNGNGNGAKI. The stretch at 202-528 forms a coiled coil; it reads EVQDREERCQ…AASQAQQEVQ (327 aa). In terms of domain architecture, SMC hinge spans 542-656; the sequence is PGVCGLVAQL…VFDTLVNARN (115 aa). The stretch at 692–1046 forms a coiled coil; sequence TMVSEDTAEV…ERTELLLRIE (355 aa).

Belongs to the SMC family. In terms of assembly, homodimer.

It is found in the cytoplasm. Functionally, required for chromosome condensation and partitioning. The polypeptide is Chromosome partition protein Smc (Synechocystis sp. (strain ATCC 27184 / PCC 6803 / Kazusa)).